The following is a 1081-amino-acid chain: DNA polymerase catalytic subunit (1081 aa).

Belongs to the DNA polymerase type-B family. In terms of assembly, forms a complex with the ssDNA-binding protein UL29, the DNA polymerase processivity factor, and the alkaline exonuclease. Interacts with the putative helicase-primase complex subunit UL8; this interaction may coordinate leading and lagging strand DNA synthesis at the replication fork.

It is found in the host nucleus. The enzyme catalyses DNA(n) + a 2'-deoxyribonucleoside 5'-triphosphate = DNA(n+1) + diphosphate. The catalysed reaction is Endonucleolytic cleavage to 5'-phosphomonoester.. Replicates viral genomic DNA. The replication complex is composed of six viral proteins: the DNA polymerase, processivity factor, primase, primase-associated factor, helicase, and ssDNA-binding protein. Additionally, the polymerase contains an intrinsic ribonuclease H (RNase H) activity that specifically degrades RNA/DNA heteroduplexes or duplex DNA substrates in the 5' to 3' direction. Therefore, it can catalyze the excision of the RNA primers that initiate the synthesis of Okazaki fragments at a replication fork during viral DNA replication. This Psittacid herpesvirus 1 (isolate Amazon parrot/-/97-0001/1997) (PsHV-1) protein is DNA polymerase catalytic subunit (UL30).